The following is a 1294-amino-acid chain: Phosphoribosylformylglycinamidine synthase (1294 aa).

Residues 303–325 (WPGAATGSGGEIRDEGATGRGSK) form a disordered region. Residues 305-316 (GAATGSGGEIRD), 384-386 (TGY), and alanine 676 each bind ATP. Residues aspartate 677, glutamate 716, asparagine 720, and aspartate 883 each contribute to the Mg(2+) site. Serine 885 is a binding site for ATP. The Glutamine amidotransferase type-1 domain maps to 1041-1294 (VAVLREQGVN…MFRNARRQLG (254 aa)). Residue cysteine 1134 is the Nucleophile of the active site. Residues histidine 1259 and glutamate 1261 contribute to the active site.

It in the N-terminal section; belongs to the FGAMS family. As to quaternary structure, monomer.

It is found in the cytoplasm. It catalyses the reaction N(2)-formyl-N(1)-(5-phospho-beta-D-ribosyl)glycinamide + L-glutamine + ATP + H2O = 2-formamido-N(1)-(5-O-phospho-beta-D-ribosyl)acetamidine + L-glutamate + ADP + phosphate + H(+). Its pathway is purine metabolism; IMP biosynthesis via de novo pathway; 5-amino-1-(5-phospho-D-ribosyl)imidazole from N(2)-formyl-N(1)-(5-phospho-D-ribosyl)glycinamide: step 1/2. Functionally, phosphoribosylformylglycinamidine synthase involved in the purines biosynthetic pathway. Catalyzes the ATP-dependent conversion of formylglycinamide ribonucleotide (FGAR) and glutamine to yield formylglycinamidine ribonucleotide (FGAM) and glutamate. The sequence is that of Phosphoribosylformylglycinamidine synthase from Pectobacterium atrosepticum (strain SCRI 1043 / ATCC BAA-672) (Erwinia carotovora subsp. atroseptica).